A 442-amino-acid chain; its full sequence is Serine--tRNA ligase (442 aa).

249–251 (TSE) contacts L-serine. 280–282 (RSE) provides a ligand contact to ATP. Glu-303 is an L-serine binding site. An ATP-binding site is contributed by 367-370 (EISS). Ser-402 is an L-serine binding site.

This sequence belongs to the class-II aminoacyl-tRNA synthetase family. Type-1 seryl-tRNA synthetase subfamily. In terms of assembly, homodimer. The tRNA molecule binds across the dimer.

The protein resides in the cytoplasm. The enzyme catalyses tRNA(Ser) + L-serine + ATP = L-seryl-tRNA(Ser) + AMP + diphosphate + H(+). The catalysed reaction is tRNA(Sec) + L-serine + ATP = L-seryl-tRNA(Sec) + AMP + diphosphate + H(+). It functions in the pathway aminoacyl-tRNA biosynthesis; selenocysteinyl-tRNA(Sec) biosynthesis; L-seryl-tRNA(Sec) from L-serine and tRNA(Sec): step 1/1. Functionally, catalyzes the attachment of serine to tRNA(Ser). Is also able to aminoacylate tRNA(Sec) with serine, to form the misacylated tRNA L-seryl-tRNA(Sec), which will be further converted into selenocysteinyl-tRNA(Sec). In Acidovorax ebreus (strain TPSY) (Diaphorobacter sp. (strain TPSY)), this protein is Serine--tRNA ligase.